Here is a 210-residue protein sequence, read N- to C-terminus: Thymidylate kinase (210 aa).

10–17 (GGEGAGKS) contributes to the ATP binding site.

The protein belongs to the thymidylate kinase family.

The enzyme catalyses dTMP + ATP = dTDP + ADP. Functionally, phosphorylation of dTMP to form dTDP in both de novo and salvage pathways of dTTP synthesis. The protein is Thymidylate kinase of Magnetococcus marinus (strain ATCC BAA-1437 / JCM 17883 / MC-1).